A 1291-amino-acid polypeptide reads, in one-letter code: Capping protein-inhibiting regulator of actin dynamics (1291 aa).

Residues S7 and S28 each carry the phosphoserine modification. Disordered regions lie at residues 48–71 (KFGQ…SSEE), 84–137 (QQDI…AGTI), 159–221 (HKLA…HEEK), 234–253 (KCKR…EQRR), 267–663 (QELL…ASHA), and 701–1238 (LGLS…TSVT). S132 is modified (phosphoserine). Basic residues predominate over residues 159–176 (HKLAVKPKNQRVSRKHRW). Residues 184–199 (EPGSFESQSSLDQNGQ) are compositionally biased toward polar residues. Residues 201 to 221 (GEDKHIWHGEEPEPLESHEEK) are compositionally biased toward basic and acidic residues. The segment covering 270 to 291 (LEEEEEGEEEEEVKEEGEEGEE) has biased composition (acidic residues). Basic and acidic residues-rich tracts occupy residues 302-318 (PPEE…RCTE), 326-461 (DPAR…EDAK), and 470-483 (EAKR…KETP). The interval 324–560 (ADDPARLEAE…DLDAHCGGVD (237 aa)) is required for interaction with actin-capping proteins. A Phosphothreonine modification is found at T482. S493 and S510 each carry phosphoserine. Basic and acidic residues-rich tracts occupy residues 506–527 (ADQR…REDL) and 534–543 (EIAEEPRGEG). Residues 580-593 (EGTPAPEENEATAA) are compositionally biased toward low complexity. A compositionally biased stretch (basic and acidic residues) spans 594–612 (DIDRKVEELRWQEVDERQT). S636 carries the phosphoserine modification. T639 carries the post-translational modification Phosphothreonine. The span at 749–778 (KNSEGDQRGDREPARAGDEPVPRARCDSRG) shows a compositional bias: basic and acidic residues. S867 is subject to Phosphoserine. Low complexity predominate over residues 875–888 (TESTTTLDSETTSD). Residues 969 to 983 (QERKPALSPRKDSAE) show a composition bias toward basic and acidic residues. A Phosphothreonine modification is found at T1033. A Phosphoserine modification is found at S1037. Residues 1056–1070 (GKLDSEPSETAKESS) show a composition bias toward basic and acidic residues. Position 1076 is a phosphoserine (S1076). Composition is skewed to basic and acidic residues over residues 1081-1098 (EELK…EKKP), 1117-1141 (TGRK…EKVE), and 1157-1182 (GFRE…KLSK). Composition is skewed to polar residues over residues 1183–1197 (ETVS…SRAS) and 1229–1238 (KSNTLPTSVT).

In terms of assembly, directly interacts with actin-capping proteins CAPZA1, CAPZA2 and CAPZB; this interaction decreases the binding of capping proteins to actin. Expressed in the small intestine (at protein level).

Its subcellular location is the cytoplasm. The protein resides in the cytosol. Its function is as follows. Involved in epithelial cell integrity by acting on the dynamics of the actin cytoskeleton. Positively regulates the actin polymerization, by inhibiting the interaction of actin-capping proteins with actin. The protein is Capping protein-inhibiting regulator of actin dynamics of Mus musculus (Mouse).